Here is a 336-residue protein sequence, read N- to C-terminus: Succinylglutamate desuccinylase (336 aa).

Zn(2+) contacts are provided by His59, Glu62, and His151. Glu215 is a catalytic residue.

This sequence belongs to the AspA/AstE family. Succinylglutamate desuccinylase subfamily. Zn(2+) is required as a cofactor.

It catalyses the reaction N-succinyl-L-glutamate + H2O = L-glutamate + succinate. The protein operates within amino-acid degradation; L-arginine degradation via AST pathway; L-glutamate and succinate from L-arginine: step 5/5. Functionally, transforms N(2)-succinylglutamate into succinate and glutamate. The sequence is that of Succinylglutamate desuccinylase from Pseudomonas fluorescens (strain ATCC BAA-477 / NRRL B-23932 / Pf-5).